A 172-amino-acid polypeptide reads, in one-letter code: MLDAFTKVVAQADTRGRFVSDSQIDALKQLVADGTKRLDVVNRITASSSSIVTDAARALFEDQPQLIAPGGNAYTNRRIAACMRDMDIILRYVTYAVFSGDASVLEDRCLNGLRETYSALGVPGGSVAVGIDKMKAAAIALANDPNGVTRGDCSALMSELASYFDKAAAAVG.

The residue at position 72 (Asn-72) is an N4-methylasparagine. (2R,3E)-phycocyanobilin is bound by residues Cys-82 and Cys-153.

It belongs to the phycobiliprotein family. In terms of assembly, heterodimer of an alpha and a beta subunit, which further assembles into trimers and the trimers into hexamers. Post-translationally, contains two covalently linked bilin chromophores.

It localises to the cellular thylakoid membrane. Its function is as follows. Light-harvesting photosynthetic bile pigment-protein from the phycobiliprotein complex (phycobilisome, PBS). Phycocyanin is the major phycobiliprotein in the PBS rod. This is C-phycocyanin-2 beta subunit (cpcB2) from Pseudanabaena tenuis (strain PCC 7409).